We begin with the raw amino-acid sequence, 812 residues long: Hyaluronate lyase HylB (812 aa).

The segment at residues 1 to 32 is a signal peptide (tat-type signal); the sequence is MFGTPSRRTFLTASALSAMALAASPTVTDAIA. Catalysis depends on residues asparagine 222, histidine 272, and tyrosine 281.

The protein belongs to the polysaccharide lyase 8 family. Post-translationally, predicted to be exported by the Tat system. The position of the signal peptide cleavage has been experimentally proven.

It localises to the secreted. The catalysed reaction is [hyaluronan](n) = n 3-(4-deoxy-beta-D-gluc-4-enuronosyl)-N-acetyl-D-glucosamine + H2O. Functionally, degrades hyaluronic acid (HA) exclusively into HA disaccharides (HA-2). Produced HA-2s confer anti-inflammatory properties leading to reduced immunopathology in the mouse model of acne. This chain is Hyaluronate lyase HylB, found in Cutibacterium acnes (Propionibacterium acnes).